We begin with the raw amino-acid sequence, 985 residues long: Invasin (985 aa).

Residues 494–594 (SVTVQQPQLT…RQSVDTHFVK (101 aa)) form a D1 region. Residues 494 to 985 (SVTVQQPQLT…LAFPLCALAI (492 aa)) are Extracellular-facing. 2 consecutive Big-1 domains span residues 503–594 (TLTA…HFVK) and 601–691 (KSTL…VNFT). Residues 595–694 (GTIAADKSTL…SVTVNFTADP (100 aa)) are D2. The D3 stretch occupies residues 695–794 (IPDAGRSSFT…LQKKISLFPV (100 aa)). The interval 795 to 886 (PTLTGILVNG…YSVSYRFYPN (92 aa)) is D4. Positions 795 to 985 (PTLTGILVNG…LAFPLCALAI (191 aa)) are integrin-binding. Residues 887–985 (RWIYDGGTSL…LAFPLCALAI (99 aa)) form a D5 region. A disulfide bridge connects residues cysteine 906 and cysteine 981.

The protein belongs to the intimin/invasin family.

The protein resides in the cell surface. Functionally, invasin is a protein that allows enteric bacteria to penetrate cultured mammalian cells. The entry of invasin in the cell is mediated by binding several beta-1 chain integrins. This chain is Invasin, found in Yersinia pseudotuberculosis serotype I (strain IP32953).